The primary structure comprises 142 residues: Small ribosomal subunit protein uS12 (142 aa).

Residues 1 to 30 are disordered; it reads MGKTRGMGAARKLKNHRRRQRWADKSYKKS. Over residues 11 to 20 the composition is skewed to basic residues; the sequence is RKLKNHRRRQ. The span at 21–30 shows a compositional bias: basic and acidic residues; sequence RWADKSYKKS. P61 is subject to Hydroxyproline.

This sequence belongs to the universal ribosomal protein uS12 family.

The sequence is that of Small ribosomal subunit protein uS12 (RPS23) from Fragaria ananassa (Strawberry).